We begin with the raw amino-acid sequence, 104 residues long: Large ribosomal subunit protein uL24 (104 aa).

The protein belongs to the universal ribosomal protein uL24 family. Part of the 50S ribosomal subunit.

Its function is as follows. One of two assembly initiator proteins, it binds directly to the 5'-end of the 23S rRNA, where it nucleates assembly of the 50S subunit. One of the proteins that surrounds the polypeptide exit tunnel on the outside of the subunit. The protein is Large ribosomal subunit protein uL24 of Corynebacterium kroppenstedtii (strain DSM 44385 / JCM 11950 / CIP 105744 / CCUG 35717).